The following is a 3259-amino-acid chain: Golgin subfamily B member 1 (3259 aa).

Met1 carries the post-translational modification N-acetylmethionine. Over Met1 to Arg3235 the chain is Cytoplasmic. A phosphoserine mark is found at Ser6, Ser17, Ser138, and Ser528. A coiled-coil region spans residues Glu48–Leu593. Positions Gly119–Glu142 are disordered. Basic and acidic residues predominate over residues Gln131–Glu142. Residues Leu624–Ile652 form a disordered region. The segment covering Val635–Glu650 has biased composition (basic and acidic residues). Phosphoserine is present on Ser653. Coiled coils occupy residues Asp677–Pro1028, Leu1062–Asp1245, and Gly1301–His1779. A disordered region spans residues Ala944–Tyr963. The span at Ser1747–Ile1763 shows a compositional bias: basic and acidic residues. Positions Ser1747–Phe1829 are disordered. Composition is skewed to polar residues over residues Gln1782–Pro1794 and Ser1802–Ser1820. Positions Asp1828 to Glu3185 form a coiled coil. A phosphoserine mark is found at Ser2216, Ser2735, Ser2872, and Ser2884. The tract at residues Arg2856–Val2876 is disordered. Polar residues predominate over residues Ser2865–Glu2875. The segment at Thr2998–Gln3021 is disordered. Ser3037 bears the Phosphoserine mark. A disordered region spans residues Ile3107–Gln3140. A compositionally biased stretch (basic and acidic residues) spans Asn3118–Glu3131. The helical transmembrane segment at Val3236–Thr3256 threads the bilayer. The Lumenal portion of the chain corresponds to Gly3257–Leu3259.

In terms of assembly, homodimer; disulfide-linked. Interacts with PLK3.

The protein localises to the golgi apparatus membrane. In terms of biological role, may participate in forming intercisternal cross-bridges of the Golgi complex. The sequence is that of Golgin subfamily B member 1 (GOLGB1) from Homo sapiens (Human).